A 606-amino-acid polypeptide reads, in one-letter code: Probable potassium transport system protein Kup 2 (606 aa).

The next 12 helical transmembrane spans lie at 18-38 (GLVF…IMTL), 46-66 (VLGI…VEYA), 97-117 (VAFV…DGII), 140-160 (AQGV…IFQF), 169-189 (AFGP…IVSI), 204-224 (AVTF…EVIL), 247-267 (AWYF…AFIL), 286-306 (ILYI…SQAL), 339-359 (IYIG…MLIF), 368-388 (AYGL…TMIF), 395-415 (WKVP…TANF), and 418-438 (LPHG…IMII).

The protein belongs to the HAK/KUP transporter (TC 2.A.72) family.

It localises to the cell inner membrane. The catalysed reaction is K(+)(in) + H(+)(in) = K(+)(out) + H(+)(out). Transport of potassium into the cell. Likely operates as a K(+):H(+) symporter. This is Probable potassium transport system protein Kup 2 from Geobacter metallireducens (strain ATCC 53774 / DSM 7210 / GS-15).